The primary structure comprises 464 residues: GTPase Der (464 aa).

EngA-type G domains lie at 5-169 (PTIA…KQKG) and 190-368 (IKVA…RESH). GTP is bound by residues 11–18 (GRPNVGKS), 58–62 (DTGGI), 121–124 (NKAD), 196–203 (GRPNAGKS), 243–247 (DTAGM), and 308–311 (NKFD). A KH-like domain is found at 369 to 461 (NLPTTGQLNR…PVIFSARSRV (93 aa)).

Belongs to the TRAFAC class TrmE-Era-EngA-EngB-Septin-like GTPase superfamily. EngA (Der) GTPase family. In terms of assembly, associates with the 50S ribosomal subunit.

Functionally, GTPase that plays an essential role in the late steps of ribosome biogenesis. This chain is GTPase Der, found in Akkermansia muciniphila (strain ATCC BAA-835 / DSM 22959 / JCM 33894 / BCRC 81048 / CCUG 64013 / CIP 107961 / Muc).